The following is a 472-amino-acid chain: Zinc finger and BTB domain-containing protein 18.2 (472 aa).

One can recognise a BTB domain in the interval 24-91 (CDCTVLVGEA…MYEGKLEFSN (68 aa)). Residues 127–149 (KIIDDGEKDDKPVDSEEHHEHSF) are compositionally biased toward basic and acidic residues. 3 disordered regions span residues 127–155 (KIID…SQQK), 197–236 (AGKT…FKPM), and 269–334 (DLLS…LSTS). The segment covering 205-215 (SSPSSPLSQRS) has biased composition (low complexity). The segment covering 279–288 (AKSPKSQQVG) has biased composition (polar residues). Positions 309-319 (HTREDDLYQDR) are enriched in basic and acidic residues. C2H2-type zinc fingers lie at residues 344–366 (CICP…LSSH), 384–406 (PTCT…ERTH), 412–434 (FTCG…AVVH), and 440–463 (HACK…RKFH).

Belongs to the krueppel C2H2-type zinc-finger protein family. ZBTB18 subfamily.

The protein localises to the nucleus. Functionally, transcriptional repressor that plays a role in various developmental processes. Specifically binds the consensus DNA sequence 5'-[AC]ACATCTG[GT][AC]-3' which contains the E box core, and acts by recruiting chromatin remodeling multiprotein complexes. This is Zinc finger and BTB domain-containing protein 18.2 (zbtb18.2) from Xenopus laevis (African clawed frog).